The chain runs to 309 residues: 2-phospho-L-lactate transferase (309 aa).

7,8-didemethyl-8-hydroxy-5-deazariboflavin-binding residues include Asp50 and Arg89.

Belongs to the CofD family. As to quaternary structure, homodimer. The cofactor is Mg(2+).

It catalyses the reaction (2S)-lactyl-2-diphospho-5'-guanosine + 7,8-didemethyl-8-hydroxy-5-deazariboflavin = oxidized coenzyme F420-0 + GMP + H(+). The protein operates within cofactor biosynthesis; coenzyme F420 biosynthesis. Functionally, catalyzes the transfer of the 2-phospholactate moiety from (2S)-lactyl-2-diphospho-5'-guanosine to 7,8-didemethyl-8-hydroxy-5-deazariboflavin (FO) with the formation of oxidized coenzyme F420-0 and GMP. In Methanococcus maripaludis (strain DSM 14266 / JCM 13030 / NBRC 101832 / S2 / LL), this protein is 2-phospho-L-lactate transferase.